Consider the following 214-residue polypeptide: MAETSGPQSSHISSSSVGEKGSGCAVRDLLYWRDVKQSGMVFGGTMVLLLSLAAFSIISVISYLVLSLLTVTISYRVYKSVLQAVQKTDEGHPFKPLLEKDITLSSDSFQKALTASLAHVNHALKYIVRLFLVDDLVDSLKLALLMWLMTYVGAVFNGITLLILGVLLTFTAPIVYEKYKVQIDHYVSLVHSQVKSITEKIQAKLPGALKKKSE.

The interval 1–21 (MAETSGPQSSHISSSSVGEKG) is disordered. One can recognise a Reticulon domain in the interval 26-214 (VRDLLYWRDV…LPGALKKKSE (189 aa)). The next 2 membrane-spanning stretches (helical) occupy residues 46–66 (MVLLLSLAAFSIISVISYLVL) and 155–175 (VFNGITLLILGVLLTFTAPIV).

Homodimer. As to expression, expressed in the animal hemisphere at the four-cell stage. During gastrulation, expression becomes restricted to the prospective neuroectoderm. At the early tail bud stage, expressed in the head structure. At the tadpole stage, expressed in head and neural tissues including the otic vesicle and optic nerve.

It is found in the endoplasmic reticulum membrane. It localises to the golgi apparatus membrane. Its function is as follows. May be involved in membrane trafficking in the early secretory pathway. This is Reticulon-3-A (rtn3-a) from Xenopus laevis (African clawed frog).